Reading from the N-terminus, the 199-residue chain is Single-stranded DNA-binding protein 2 (199 aa).

The SSB domain occupies 1–110 (MAGETVITVV…LDVDEVGASL (110 aa)). Residues 114–199 (TAKVTKTSGQ…GGGYSDEPPF (86 aa)) form a disordered region. Residues 123–156 (QGRGGQGGYGGGGGGQGGGGWGGGPGGGQQGGGA) show a composition bias toward gly residues. Over residues 157–166 (PADDPWATGG) the composition is skewed to low complexity. A compositionally biased stretch (gly residues) spans 167–193 (APAGGQQGGGGQGGGGWGGGSGGGGGY).

As to quaternary structure, homotetramer. Post-translationally, phosphorylated on tyrosine residue(s) when expressed in E.coli.

The protein localises to the cytoplasm. It is found in the nucleoid. The protein is Single-stranded DNA-binding protein 2 (ssb2) of Streptomyces coelicolor (strain ATCC BAA-471 / A3(2) / M145).